We begin with the raw amino-acid sequence, 642 residues long: MDPPRDIQHFKRNIASRSTVSSCSSLAMEIKRKKIRESMFFPSEDCDIKEKMEFEMRMRAGAYKLMVASTKKEQVLDASRSLLTCNARIKAYMSEAQKRTGHQDFRRPSDSQGQVPCKGKVAISGLRIPLFWKDSEHFNSKGNTQRVAVFCLMKIGSEIFDTEMVIADSSMTDICFEGVKIFSEVKPDFELTFELYICGLDEEATFANTPKKLARKLRSSFGRSSGRKLCPLLDGGDPDTFLQSNPIPPGARYSLLAYTTLGLEQAEGSFQSHSLIILQNVEASSWLPLYGNLCCQLVAQPDCMTLDMMSGFLSQQQSIEGLQRRCRLYCVLKAGKISCYYSPEEIQAKVEPILIIPINKETRIRVVENDHQRPGSRLNLINPGNGDSASHVFIAESPDVLQEWLDSLWQHIYDQSQWQHTCDKLMEIDVLSPRKPPLFLTKQADSVYNDLSIGSPGKFESLTDIIHNKIEETNGRFLIGQEEETEPPHWAALFEGSRPIVVQKTVLSPGKESNRSITSPDTGSKKKRRAPPPPPDKLPFTSVSTNQEKENCKGPKPRAGRPSLDAKFSAIIQQLQKSHTSTRKNAPLGQIETGQQPEKRAEESDLPEYTKKEYIVDPQPPVPAPRNKLRMSFREKMNPKAW.

The REM-1 domain maps to 30 to 105 (IKRKKIRESM…AQKRTGHQDF (76 aa)). The region spanning 306 to 413 (LDMMSGFLSQ…WLDSLWQHIY (108 aa)) is the PH domain. 2 disordered regions span residues 505-563 (TVLS…GRPS) and 575-642 (LQKS…PKAW). 2 stretches are compositionally biased toward basic and acidic residues: residues 597 to 615 (PEKRAEESDLPEYTKKEYI) and 632 to 642 (SFREKMNPKAW).

The polypeptide is Rhotekin-2 (rtkn2) (Danio rerio (Zebrafish)).